Reading from the N-terminus, the 545-residue chain is MNLGRCPLAPRSANIVLPKHDAVSKQKEYRIEEKTNEAQREEIITWKDNREDEGEVKTDFEVVNNENIITTTPKHQTVITPKSYRKSVKRIKHDAPQNEDIPVMKGLAPINADTESKAESMAAGKVLGSKNSSQKARLQEWKRQYKKAFPHFRFYLDGCDPSVAHRVKKQIQQLGGHVETFFSGNVTHVATVRAIQDVSVKYAKQDVITKARQLNMKIWSMEKLCNRVLKTLMENDQCTTNAPTKQGNDLSYLLYVEKVQGTNERDLSVPRQDFVHFRGPYLYVHDIANIYKPILLREWQKPLPDRDVPWPTFRATSIGRCPFVPETKYRLSTSKSLVAKNDQQLLQRQSQEPSLILRANSMKASLPDISNTGISGMNTNTTYNTNINNTPQTAISGITQDTSPSIRTNCHHCLDDGMQASGIVQSNLTSAAMSNNSAIRSGSAASVPVVTINGRDIAELKKRIIQQKSGMIGKDYSYKAMLHNTSQRKIRVDAKPGYCENCREKFDNFESHIRSSRHRRFAENNDNFKDLDELFALVQRPLRPD.

The DBF4-type zinc-finger motif lies at 492–541 (VDAKPGYCENCREKFDNFESHIRSSRHRRFAENNDNFKDLDELFALVQRP). Residues C499, C502, H512, and H518 each contribute to the Zn(2+) site.

Associates with hsk1. Interacts with mcm10. Post-translationally, hyperphosphorylated at the G1/S and S-phases of the cell cycle.

Its subcellular location is the nucleus. Its function is as follows. Activates hsk1 kinase and is essential for G1/S transition. Has a role in S-phase checkpoint control induced by replication fork blocks after nucleotide deprivation and DNA damage. The polypeptide is Hsk1-interacting molecule 1 (him1) (Schizosaccharomyces pombe (strain 972 / ATCC 24843) (Fission yeast)).